Here is a 234-residue protein sequence, read N- to C-terminus: tRNA (guanine-N(1)-)-methyltransferase (234 aa).

S-adenosyl-L-methionine-binding positions include Gly-110 and 134–139; that span reads IGDYVL.

Belongs to the RNA methyltransferase TrmD family. As to quaternary structure, homodimer.

Its subcellular location is the cytoplasm. The catalysed reaction is guanosine(37) in tRNA + S-adenosyl-L-methionine = N(1)-methylguanosine(37) in tRNA + S-adenosyl-L-homocysteine + H(+). In terms of biological role, specifically methylates guanosine-37 in various tRNAs. The protein is tRNA (guanine-N(1)-)-methyltransferase of Tropheryma whipplei (strain TW08/27) (Whipple's bacillus).